Here is a 420-residue protein sequence, read N- to C-terminus: Disease resistance protein CHS1 (420 aa).

One can recognise a TIR domain in the interval 12–167; sequence RELDVFLSFS…QIADDIRLMF (156 aa). Glu-86 is an active-site residue. One can recognise an NB-ARC domain in the interval 185–406; the sequence is MKALYALLAL…KDIKEVWKIM (222 aa).

As to expression, mostly expressed in leaves and flowers (mainly in sepals), and, at a lower intensity, in stems. Present at low levels in roots and seeds.

It localises to the cytoplasm. Its subcellular location is the nucleus. The enzyme catalyses NAD(+) + H2O = ADP-D-ribose + nicotinamide + H(+). In terms of biological role, confers resistance to low temperatures by limiting chloroplast damage and cell death, thus maintaining growth homeostasis. Regulates steryl-esters and sterols accumulation. Limits leaf necrosis associated with virulent bacterial infection (e.g. Pseudomonas syringae pv. tomato DC3000). In Arabidopsis thaliana (Mouse-ear cress), this protein is Disease resistance protein CHS1.